The sequence spans 434 residues: Methylenetetrahydrofolate--tRNA-(uracil-5-)-methyltransferase TrmFO (434 aa).

10–15 serves as a coordination point for FAD; that stretch reads GAGLAG.

This sequence belongs to the MnmG family. TrmFO subfamily. It depends on FAD as a cofactor.

The protein resides in the cytoplasm. The enzyme catalyses uridine(54) in tRNA + (6R)-5,10-methylene-5,6,7,8-tetrahydrofolate + NADH + H(+) = 5-methyluridine(54) in tRNA + (6S)-5,6,7,8-tetrahydrofolate + NAD(+). It catalyses the reaction uridine(54) in tRNA + (6R)-5,10-methylene-5,6,7,8-tetrahydrofolate + NADPH + H(+) = 5-methyluridine(54) in tRNA + (6S)-5,6,7,8-tetrahydrofolate + NADP(+). Its function is as follows. Catalyzes the folate-dependent formation of 5-methyl-uridine at position 54 (M-5-U54) in all tRNAs. The sequence is that of Methylenetetrahydrofolate--tRNA-(uracil-5-)-methyltransferase TrmFO from Bacillus cereus (strain ATCC 14579 / DSM 31 / CCUG 7414 / JCM 2152 / NBRC 15305 / NCIMB 9373 / NCTC 2599 / NRRL B-3711).